A 473-amino-acid polypeptide reads, in one-letter code: Rifampicin monooxygenase (473 aa).

Residues threonine 12, glutamate 31, lysine 32, and arginine 41 each coordinate FAD. Residue arginine 43 coordinates rifampicin. Positions 98, 122, and 156 each coordinate FAD. A rifampicin-binding site is contributed by arginine 196. Aspartate 276 contributes to the FAD binding site. Rifampicin is bound at residue glycine 285. Positions 289 and 290 each coordinate FAD.

Belongs to the rifampicin monooxygenase family. Homodimer. Requires FAD as cofactor.

The catalysed reaction is rifampicin + NADPH + O2 = rifampicin para-naphthoquinone carboxamide + NADP(+) + H2O + H(+). It carries out the reaction rifampicin + NADH + O2 = rifampicin para-naphthoquinone carboxamide + NAD(+) + H2O + H(+). Functionally, monooxygenase that can modify rifampicin, thereby inactivating its antibiotic activity. It constitutes a secondary rifampicin resistance factor. The polypeptide is Rifampicin monooxygenase (Nocardia farcinica (strain IFM 10152)).